Consider the following 563-residue polypeptide: Coiled-coil domain-containing protein 63 (563 aa).

The segment at 1 to 29 (MSVLKKNRRKDSDTPQEPSEKAKEQQAEA) is disordered. Positions 10 to 29 (KDSDTPQEPSEKAKEQQAEA) are enriched in basic and acidic residues. Coiled-coil stretches lie at residues 18–201 (PSEK…QLQH), 233–291 (AMKD…AKKH), and 341–422 (TELN…KKIN).

Its function is as follows. Plays a role in spermiogenesis. Involved in the elongation of flagella and the formation of sperm heads. This is Coiled-coil domain-containing protein 63 from Homo sapiens (Human).